Consider the following 230-residue polypeptide: MTTLTARPEAITFDPQQSALIVVDMQNAYATPGGYLDLAGFDVSTTRPVIANIQTAVTAARAAGMLIIWFQNGWDEQYVEAGGPGSPNFHKSNALKTMRKQPQLQGKLLAKGSWDYQLVDELVPQPGDIVLPKPRYSGFFNTPLDSILRSRGIRHLVFTSIATNVCVESTLRDGFFLEYFGVVLEDATHQAGPEFVQKAALFNIETFFGWVSDVETFCDALSPTSFARIA.

Asp24 functions as the Proton acceptor in the catalytic mechanism. The active site involves Lys133. Catalysis depends on Cys166, which acts as the Nucleophile.

Belongs to the isochorismatase family. RutB subfamily.

The catalysed reaction is (Z)-3-ureidoacrylate + H2O + H(+) = (Z)-3-aminoacrylate + NH4(+) + CO2. It catalyses the reaction (Z)-3-ureidoacrylate + H2O = (Z)-3-aminoacrylate + carbamate + H(+). It carries out the reaction (Z)-2-methylureidoacrylate + H2O + H(+) = (Z)-2-methylaminoacrylate + NH4(+) + CO2. Its function is as follows. Hydrolyzes ureidoacrylate to form aminoacrylate and carbamate. The carbamate hydrolyzes spontaneously, thereby releasing one of the nitrogen atoms of the pyrimidine ring as ammonia and one of its carbon atoms as CO2. This is Ureidoacrylate amidohydrolase RutB from Escherichia coli O157:H7.